We begin with the raw amino-acid sequence, 237 residues long: MDGWRSRFKRLHRTLSVGEEQCTPAIKLNSPDATLQTEACAPEDEGGLPPVQLCGYLSSTRDRLLTAELCAELRPLMPSRIQLYTKWCLLYSLEQHGASLHSLYEHVRPEEPAKARVGYLLIMRDRRGGLFGAYANEPFRPTESRRYSGNGECFLWSADLHPMLRLRAYPYTGLNEFCIYCTSGFLSMGAGSGHYGLWCDEGLVHGVSERSPTFGNDALSREGPRFHIVALEVWRVG.

Residues 63–237 enclose the TLDc domain; sequence RLLTAELCAE…IVALEVWRVG (175 aa).

It belongs to the OXR1 family.

Its subcellular location is the mitochondrion. In terms of biological role, may be involved in protection from oxidative damage. In Eremothecium gossypii (strain ATCC 10895 / CBS 109.51 / FGSC 9923 / NRRL Y-1056) (Yeast), this protein is Oxidation resistance protein 1 (OXR1).